An 81-amino-acid polypeptide reads, in one-letter code: UPF0386 protein Smed_0945 (81 aa).

It belongs to the UPF0386 family.

This Sinorhizobium medicae (strain WSM419) (Ensifer medicae) protein is UPF0386 protein Smed_0945.